An 85-amino-acid chain; its full sequence is Large ribosomal subunit protein bL27 (85 aa).

The disordered stretch occupies residues 1–21 (MAHKKAAGSSRNGRDSESKRL).

It belongs to the bacterial ribosomal protein bL27 family.

In Chromohalobacter salexigens (strain ATCC BAA-138 / DSM 3043 / CIP 106854 / NCIMB 13768 / 1H11), this protein is Large ribosomal subunit protein bL27.